A 106-amino-acid polypeptide reads, in one-letter code: Large ribosomal subunit protein eL42 (106 aa).

The tract at residues 26–53 (YKKGKDSLYAQGKRRYDRKQSGYGGQTK) is disordered.

This sequence belongs to the eukaryotic ribosomal protein eL42 family. As to quaternary structure, component of the large ribosomal subunit.

It is found in the cytoplasm. Functionally, component of the large ribosomal subunit. The ribosome is a large ribonucleoprotein complex responsible for the synthesis of proteins in the cell. In Danio rerio (Zebrafish), this protein is Large ribosomal subunit protein eL42 (rpl36a).